The following is a 324-amino-acid chain: GDP-mannose transporter (324 aa).

At 1–13 (MSELKSRIGNSGS) the chain is on the cytoplasmic side. A helical transmembrane segment spans residues 14 to 34 (IANSGPVSILCYCASSILMTV). Over 35-44 (TNKFVVNTDG) the chain is Lumenal. A helical transmembrane segment spans residues 45 to 65 (FNMFFVMLFAQSLVCTMCLMV). Over 66–76 (LKMFGYAKYRP) the chain is Cytoplasmic. Residues 77–97 (LNLIDVKNWLPISFLLVFMIF) traverse the membrane as a helical segment. The Lumenal portion of the chain corresponds to 98 to 116 (TSAKALKYMPVPIYTIFKN). A glycan (N-linked (GlcNAc...) asparagine) is linked at Asn-116. The chain crosses the membrane as a helical span at residues 117–137 (LTIILIAYGEVLFFGGSVTPM). Glu-138 is a topological domain (cytoplasmic). The chain crosses the membrane as a helical span at residues 139–159 (LSSFILMVLSSVVASLGDQQA). Topologically, residues 160–170 (AKIAQPLANNS) are lumenal. N-linked (GlcNAc...) asparagine glycosylation occurs at Asn-168. Residues 171–191 (ILSPEYYWMFLNCICSASFVL) form a helical membrane-spanning segment. The Cytoplasmic portion of the chain corresponds to 192 to 204 (IMRKRIKLTNFKD). Residues 205-225 (YDTMFYNNALALPILLGFSFL) form a helical membrane-spanning segment. The Lumenal portion of the chain corresponds to 226–243 (SEDWSSENLAQNFSGESL). Residue Asn-237 is glycosylated (N-linked (GlcNAc...) asparagine). The chain crosses the membrane as a helical span at residues 244 to 264 (SAMIISGMTSVGISYCSGWCV). Residues 265–270 (RATSST) are Cytoplasmic-facing. The helical transmembrane segment at 271 to 291 (TYSMVGALNKLPIALAGLIFF) threads the bilayer. Residues 292–295 (DAPR) are Lumenal-facing. Residues 296-316 (NFLSIMSIFIGFASGLSYAVA) traverse the membrane as a helical segment. Residues 317-324 (KQKKVQKN) lie on the Cytoplasmic side of the membrane.

The protein belongs to the TPT transporter family. SLC35D subfamily. As to quaternary structure, homooligomer.

The protein localises to the golgi apparatus membrane. Its subcellular location is the cytoplasmic vesicle membrane. The protein resides in the endoplasmic reticulum membrane. In terms of biological role, involved in the import of GDP-mannose from the cytoplasm into the Golgi lumen. This Candida glabrata (strain ATCC 2001 / BCRC 20586 / JCM 3761 / NBRC 0622 / NRRL Y-65 / CBS 138) (Yeast) protein is GDP-mannose transporter (VRG4).